We begin with the raw amino-acid sequence, 360 residues long: Nucleoporin SEH1 (360 aa).

WD repeat units follow at residues 10 to 49 (DHKD…DWHC), 55 to 96 (THSG…SNDK), 111 to 152 (DSRT…NLSQ), 160 to 210 (SCKL…RKYA), 217 to 258 (TVTD…KELT), and 276 to 315 (NHNS…NWKC). K12 is covalently cross-linked (Glycyl lysine isopeptide (Lys-Gly) (interchain with G-Cter in SUMO2)). Residues S179 and S190 each carry the phosphoserine modification. Polar residues predominate over residues 324–354 (SPVNGSSQQGTSNPSLGSTIPSLQNSLNGSS). Positions 324–360 (SPVNGSSQQGTSNPSLGSTIPSLQNSLNGSSAGRKHS) are disordered.

It belongs to the WD repeat SEC13 family. As to quaternary structure, component of the Nup107-160 subcomplex of the nuclear pore complex (NPC). The Nup107-160 subcomplex includes NUP160, NUP133, NUP107, NUP98, NUP85, NUP43, NUP37, SEH1 and SEC13. The SEH1 subunit appears to be only weakly associated with the Nup107-160 subcomplex. Component of the GATOR2 subcomplex, composed of MIOS, SEC13, SEH1L, WDR24 and WDR59. The GATOR2 complex interacts with CASTOR1 and CASTOR2; the interaction is negatively regulated by arginine. The GATOR2 complex interacts with SESN1, SESN2 and SESN3; the interaction is negatively regulated by amino acids. SESN1, SESN2 and SESN3 convey leucine availability via direct interaction with SEH1L and WDR24.

It is found in the chromosome. The protein resides in the centromere. Its subcellular location is the kinetochore. It localises to the nucleus. The protein localises to the nuclear pore complex. It is found in the lysosome membrane. The GATOR2 complex is negatively regulated by the upstream amino acid sensors CASTOR1 and SESN2, which sequester the GATOR2 complex in absence of amino acids. In the presence of abundant amino acids, GATOR2 is released from CASTOR1 and SESN2 and activated. Functionally, component of the Nup107-160 subcomplex of the nuclear pore complex (NPC). The Nup107-160 subcomplex is required for the assembly of a functional NPC. The Nup107-160 subcomplex is also required for normal kinetochore microtubule attachment, mitotic progression and chromosome segregation. This subunit plays a role in recruitment of the Nup107-160 subcomplex to the kinetochore. As a component of the GATOR2 complex, functions as an activator of the amino acid-sensing branch of the mTORC1 signaling pathway. The GATOR2 complex indirectly activates mTORC1 through the inhibition of the GATOR1 subcomplex. GATOR2 probably acts as an E3 ubiquitin-protein ligase toward GATOR1. In the presence of abundant amino acids, the GATOR2 complex mediates ubiquitination of the NPRL2 core component of the GATOR1 complex, leading to GATOR1 inactivation. In the absence of amino acids, GATOR2 is inhibited, activating the GATOR1 complex. Within the GATOR2 complex, SEC13 and SEH1L are required to stabilize the complex. This is Nucleoporin SEH1 (SEH1L) from Homo sapiens (Human).